Reading from the N-terminus, the 158-residue chain is MQGTLSVWLAKRGLVHRSLGFDYQGIETLQIKPEDWHSIAVILYVYGYNYLRSQCAYDVAPGGLLASVYHLTRIEYGVNQAEEVCIKVFTHRSNSRIPSVFWVWKSADFQERESYDMLGITYDSHPRLKRILMPESWIGWPLRKDYIAPNFYEIQDAY.

This sequence belongs to the complex I 30 kDa subunit family. NDH is composed of at least 16 different subunits, 5 of which are encoded in the nucleus.

The protein localises to the plastid. Its subcellular location is the chloroplast thylakoid membrane. It carries out the reaction a plastoquinone + NADH + (n+1) H(+)(in) = a plastoquinol + NAD(+) + n H(+)(out). It catalyses the reaction a plastoquinone + NADPH + (n+1) H(+)(in) = a plastoquinol + NADP(+) + n H(+)(out). Functionally, NDH shuttles electrons from NAD(P)H:plastoquinone, via FMN and iron-sulfur (Fe-S) centers, to quinones in the photosynthetic chain and possibly in a chloroplast respiratory chain. The immediate electron acceptor for the enzyme in this species is believed to be plastoquinone. Couples the redox reaction to proton translocation, and thus conserves the redox energy in a proton gradient. This is NAD(P)H-quinone oxidoreductase subunit J, chloroplastic from Aethionema cordifolium (Lebanon stonecress).